Here is a 352-residue protein sequence, read N- to C-terminus: DNA polymerase IV (352 aa).

Positions 4-185 (IIHVDMDCFY…LPLEKIPGVG (182 aa)) constitute a UmuC domain. 2 residues coordinate Mg(2+): aspartate 8 and aspartate 103. Glutamate 104 is an active-site residue.

The protein belongs to the DNA polymerase type-Y family. As to quaternary structure, monomer. Requires Mg(2+) as cofactor.

The protein localises to the cytoplasm. The enzyme catalyses DNA(n) + a 2'-deoxyribonucleoside 5'-triphosphate = DNA(n+1) + diphosphate. Its function is as follows. Poorly processive, error-prone DNA polymerase involved in untargeted mutagenesis. Copies undamaged DNA at stalled replication forks, which arise in vivo from mismatched or misaligned primer ends. These misaligned primers can be extended by PolIV. Exhibits no 3'-5' exonuclease (proofreading) activity. May be involved in translesional synthesis, in conjunction with the beta clamp from PolIII. The polypeptide is DNA polymerase IV (Pectobacterium atrosepticum (strain SCRI 1043 / ATCC BAA-672) (Erwinia carotovora subsp. atroseptica)).